The following is a 347-amino-acid chain: Geranylgeranyl pyrophosphate synthase 7, chloroplastic (347 aa).

The N-terminal 39 residues, M1–L39, are a transit peptide targeting the chloroplast. 3 residues coordinate isopentenyl diphosphate: K95, R98, and H127. 2 residues coordinate Mg(2+): D134 and D140. R145 provides a ligand contact to dimethylallyl diphosphate. R146 provides a ligand contact to isopentenyl diphosphate. The dimethylallyl diphosphate site is built by K232, T233, Q270, K287, and K297.

The protein belongs to the FPP/GGPP synthase family. In terms of assembly, monomer. Requires Mg(2+) as cofactor.

Its subcellular location is the plastid. It is found in the chloroplast. It catalyses the reaction isopentenyl diphosphate + dimethylallyl diphosphate = (2E)-geranyl diphosphate + diphosphate. The enzyme catalyses isopentenyl diphosphate + (2E)-geranyl diphosphate = (2E,6E)-farnesyl diphosphate + diphosphate. It carries out the reaction isopentenyl diphosphate + (2E,6E)-farnesyl diphosphate = (2E,6E,10E)-geranylgeranyl diphosphate + diphosphate. It functions in the pathway isoprenoid biosynthesis; farnesyl diphosphate biosynthesis; farnesyl diphosphate from geranyl diphosphate and isopentenyl diphosphate: step 1/1. Its pathway is isoprenoid biosynthesis; geranyl diphosphate biosynthesis; geranyl diphosphate from dimethylallyl diphosphate and isopentenyl diphosphate: step 1/1. The protein operates within isoprenoid biosynthesis; geranylgeranyl diphosphate biosynthesis; geranylgeranyl diphosphate from farnesyl diphosphate and isopentenyl diphosphate: step 1/1. Functionally, catalyzes the trans-addition of the three molecules of IPP onto DMAPP to form geranylgeranyl pyrophosphate. The chain is Geranylgeranyl pyrophosphate synthase 7, chloroplastic from Arabidopsis thaliana (Mouse-ear cress).